A 490-amino-acid chain; its full sequence is ATP synthase subunit beta, chloroplastic (490 aa).

170-177 (GGAGVGKT) contributes to the ATP binding site.

The protein belongs to the ATPase alpha/beta chains family. In terms of assembly, F-type ATPases have 2 components, CF(1) - the catalytic core - and CF(0) - the membrane proton channel. CF(1) has five subunits: alpha(3), beta(3), gamma(1), delta(1), epsilon(1). CF(0) has four main subunits: a(1), b(1), b'(1) and c(9-12).

The protein localises to the plastid. The protein resides in the chloroplast thylakoid membrane. It carries out the reaction ATP + H2O + 4 H(+)(in) = ADP + phosphate + 5 H(+)(out). In terms of biological role, produces ATP from ADP in the presence of a proton gradient across the membrane. The catalytic sites are hosted primarily by the beta subunits. The sequence is that of ATP synthase subunit beta, chloroplastic from Pinus koraiensis (Korean pine).